Reading from the N-terminus, the 148-residue chain is Lysozyme C (148 aa).

An N-terminal signal peptide occupies residues 1-18 (MKAVIILGLVLLSVTVQG). Residues 19–148 (KIFERCELAR…VSQYVQGCGV (130 aa)) form the C-type lysozyme domain. Intrachain disulfides connect cysteine 24–cysteine 146, cysteine 48–cysteine 134, cysteine 83–cysteine 99, and cysteine 95–cysteine 113. Active-site residues include glutamate 53 and aspartate 71.

The protein belongs to the glycosyl hydrolase 22 family. As to quaternary structure, monomer.

The protein resides in the secreted. It catalyses the reaction Hydrolysis of (1-&gt;4)-beta-linkages between N-acetylmuramic acid and N-acetyl-D-glucosamine residues in a peptidoglycan and between N-acetyl-D-glucosamine residues in chitodextrins.. Functionally, lysozymes have primarily a bacteriolytic function; those in tissues and body fluids are associated with the monocyte-macrophage system and enhance the activity of immunoagents. This is Lysozyme C (LYZ) from Macaca mulatta (Rhesus macaque).